A 99-amino-acid chain; its full sequence is UPF0235 protein ASA_3628 (99 aa).

Belongs to the UPF0235 family.

This chain is UPF0235 protein ASA_3628, found in Aeromonas salmonicida (strain A449).